A 375-amino-acid chain; its full sequence is UDP-N-acetylglucosamine--N-acetylmuramyl-(pentapeptide) pyrophosphoryl-undecaprenol N-acetylglucosamine transferase (375 aa).

Residues 13-15 (TGG), Asn-124, Arg-165, Ser-193, and Gln-294 contribute to the UDP-N-acetyl-alpha-D-glucosamine site.

The protein belongs to the glycosyltransferase 28 family. MurG subfamily.

The protein resides in the cell inner membrane. The enzyme catalyses di-trans,octa-cis-undecaprenyl diphospho-N-acetyl-alpha-D-muramoyl-L-alanyl-D-glutamyl-meso-2,6-diaminopimeloyl-D-alanyl-D-alanine + UDP-N-acetyl-alpha-D-glucosamine = di-trans,octa-cis-undecaprenyl diphospho-[N-acetyl-alpha-D-glucosaminyl-(1-&gt;4)]-N-acetyl-alpha-D-muramoyl-L-alanyl-D-glutamyl-meso-2,6-diaminopimeloyl-D-alanyl-D-alanine + UDP + H(+). Its pathway is cell wall biogenesis; peptidoglycan biosynthesis. Functionally, cell wall formation. Catalyzes the transfer of a GlcNAc subunit on undecaprenyl-pyrophosphoryl-MurNAc-pentapeptide (lipid intermediate I) to form undecaprenyl-pyrophosphoryl-MurNAc-(pentapeptide)GlcNAc (lipid intermediate II). The polypeptide is UDP-N-acetylglucosamine--N-acetylmuramyl-(pentapeptide) pyrophosphoryl-undecaprenol N-acetylglucosamine transferase (Brucella anthropi (strain ATCC 49188 / DSM 6882 / CCUG 24695 / JCM 21032 / LMG 3331 / NBRC 15819 / NCTC 12168 / Alc 37) (Ochrobactrum anthropi)).